We begin with the raw amino-acid sequence, 1391 residues long: DNA-directed RNA polymerase subunit beta (1391 aa).

It belongs to the RNA polymerase beta chain family. As to quaternary structure, the RNAP catalytic core consists of 2 alpha, 1 beta, 1 beta' and 1 omega subunit. When a sigma factor is associated with the core the holoenzyme is formed, which can initiate transcription.

It catalyses the reaction RNA(n) + a ribonucleoside 5'-triphosphate = RNA(n+1) + diphosphate. In terms of biological role, DNA-dependent RNA polymerase catalyzes the transcription of DNA into RNA using the four ribonucleoside triphosphates as substrates. The polypeptide is DNA-directed RNA polymerase subunit beta (Granulibacter bethesdensis (strain ATCC BAA-1260 / CGDNIH1)).